Consider the following 173-residue polypeptide: Acireductone dioxygenase (173 aa).

The interval 1–21 (MKFYYHDNDSSVDQCAPHDSG) is disordered. Residues histidine 84, histidine 86, glutamate 90, and histidine 129 each contribute to the Fe(2+) site. Ni(2+) contacts are provided by histidine 84, histidine 86, glutamate 90, and histidine 129.

The protein belongs to the acireductone dioxygenase (ARD) family. Requires Fe(2+) as cofactor. Ni(2+) is required as a cofactor.

It localises to the cytoplasm. Its subcellular location is the nucleus. The enzyme catalyses 1,2-dihydroxy-5-(methylsulfanyl)pent-1-en-3-one + O2 = 4-methylsulfanyl-2-oxobutanoate + formate + 2 H(+). It carries out the reaction 1,2-dihydroxy-5-(methylsulfanyl)pent-1-en-3-one + O2 = 3-(methylsulfanyl)propanoate + CO + formate + 2 H(+). It functions in the pathway amino-acid biosynthesis; L-methionine biosynthesis via salvage pathway; L-methionine from S-methyl-5-thio-alpha-D-ribose 1-phosphate: step 5/6. Catalyzes 2 different reactions between oxygen and the acireductone 1,2-dihydroxy-3-keto-5-methylthiopentene (DHK-MTPene) depending upon the metal bound in the active site. Fe-containing acireductone dioxygenase (Fe-ARD) produces formate and 2-keto-4-methylthiobutyrate (KMTB), the alpha-ketoacid precursor of methionine in the methionine recycle pathway. Ni-containing acireductone dioxygenase (Ni-ARD) produces methylthiopropionate, carbon monoxide and formate, and does not lie on the methionine recycle pathway. The protein is Acireductone dioxygenase of Yarrowia lipolytica (strain CLIB 122 / E 150) (Yeast).